Here is a 200-residue protein sequence, read N- to C-terminus: MKKIVLATGNQGKVREMADLLADFGFDVVAQSEFNVSEVAETGTTFIENAIIKARHAAKETGLAAIADDSGLEVDFLQGAPGIYSARYAGEKASDQENLEKLLTAMEGVPEAQRTARFHCVLVLMRHENDPTPIVCHGKWEGRILTQAHGDNGFGYDPIFFVPEDNCASAELEPVRKKQLSHRGKALKQLFATLREQPLV.

A substrate-binding site is contributed by 8–13; sequence TGNQGK. The active-site Proton acceptor is the D69. A Mg(2+)-binding site is contributed by D69. Substrate contacts are provided by residues S70, 154–157, K177, and 182–183; these read FGYD and HR.

Belongs to the HAM1 NTPase family. As to quaternary structure, homodimer. Mg(2+) is required as a cofactor.

The catalysed reaction is XTP + H2O = XMP + diphosphate + H(+). The enzyme catalyses dITP + H2O = dIMP + diphosphate + H(+). It carries out the reaction ITP + H2O = IMP + diphosphate + H(+). Pyrophosphatase that catalyzes the hydrolysis of nucleoside triphosphates to their monophosphate derivatives, with a high preference for the non-canonical purine nucleotides XTP (xanthosine triphosphate), dITP (deoxyinosine triphosphate) and ITP. Seems to function as a house-cleaning enzyme that removes non-canonical purine nucleotides from the nucleotide pool, thus preventing their incorporation into DNA/RNA and avoiding chromosomal lesions. In Vibrio vulnificus (strain CMCP6), this protein is dITP/XTP pyrophosphatase.